A 442-amino-acid chain; its full sequence is UDP-glycosyltransferase 79B7 (442 aa).

UDP-alpha-D-glucose-binding positions include Ser-260, 319–321 (VQQ), 336–344 (HCGPGTIWE), and 358–361 (LSDQ).

The protein belongs to the UDP-glycosyltransferase family.

The chain is UDP-glycosyltransferase 79B7 (UGT79B7) from Arabidopsis thaliana (Mouse-ear cress).